A 410-amino-acid chain; its full sequence is Aspartic proteinase Asp1 (410 aa).

The signal sequence occupies residues 1 to 23 (MTARLALLASLLLLLQLVPPSSA). Positions 24–46 (VVLELHGNVYPIGHFFVTMNIGD) are cleaved as a propeptide — removed in mature form. One can recognise a Peptidase A1 domain in the interval 38–392 (FFVTMNIGDP…DSERSLLGWV (355 aa)). Catalysis depends on residues Asp-56 and Asp-257.

The protein belongs to the peptidase A1 family. Expressed in pollen, nucellus, ovary wall, shoot and root meristem, coleoptiles of immature seeds, and somatic embryos.

Possesses protease activity in vitro. This is Aspartic proteinase Asp1 (ASP1) from Oryza sativa subsp. indica (Rice).